The chain runs to 208 residues: MHIIIAGIDTEVGKTFVSAILATLFQAEYWKPIQSGSLDRSDSTIVRELSGAVCHRETYRLTHPLAAHQAARVDNIPIHAENFSLPVTEAPLIIETSGGFLSPCSQDSLQGDVFSKWPCQWVLVSKAYLGSINHTCLTVEAMRTRNLNILGMVLNQYPKEEEDWLLNMTGIPYLGRLNYENIISKETVKNYANLWKETWEDREAKLCS.

11–16 (EVGKTF) contributes to the ATP binding site. Thr15 is a binding site for Mg(2+). Lys31 is an active-site residue. Residue Ser35 participates in substrate binding. Residues Asp42, 95 to 98 (ETSG), and 155 to 156 (NQ) contribute to the ATP site. Residues Asp42 and Glu95 each contribute to the Mg(2+) site.

Belongs to the dethiobiotin synthetase family. Homodimer. Requires Mg(2+) as cofactor.

The protein resides in the cytoplasm. It carries out the reaction (7R,8S)-7,8-diammoniononanoate + CO2 + ATP = (4R,5S)-dethiobiotin + ADP + phosphate + 3 H(+). It functions in the pathway cofactor biosynthesis; biotin biosynthesis; biotin from 7,8-diaminononanoate: step 1/2. Functionally, catalyzes a mechanistically unusual reaction, the ATP-dependent insertion of CO2 between the N7 and N8 nitrogen atoms of 7,8-diaminopelargonic acid (DAPA, also called 7,8-diammoniononanoate) to form a ureido ring. This Chlamydia felis (strain Fe/C-56) (Chlamydophila felis) protein is ATP-dependent dethiobiotin synthetase BioD.